Consider the following 524-residue polypeptide: Inorganic phosphate transporter 1-1 (524 aa).

The Cytoplasmic portion of the chain corresponds to 1-24 (MAEQQLGVLKALDVAKTQLYHFTA). The chain crosses the membrane as a helical span at residues 25–45 (IVIAGMGFFTDAYDLFCVSLV). Topologically, residues 46 to 70 (TKLLGRIYYFNPESAKPGSLPPHVA) are extracellular. Residues 71–91 (AAVNGVALCGTLSGQLFFGWL) form a helical membrane-spanning segment. At 92–99 (GDKLGRKK) the chain is on the cytoplasmic side. The chain crosses the membrane as a helical span at residues 100–120 (VYGLTLVMMILCSVASGLSFG). At 121 to 131 (HEAKGVMTTLC) the chain is on the extracellular side. The helical transmembrane segment at 132–152 (FFRFWLGFGIGGDYPLSATIM) threads the bilayer. Over 153–161 (SEYANKKTR) the chain is Cytoplasmic. The chain crosses the membrane as a helical span at residues 162-182 (GAFIAAVFAMQGVGILAGGFV). Residues 183–211 (ALAVSSIFDKKFPAPTYAVNRALSTPPQV) lie on the Extracellular side of the membrane. Residues 212–232 (DYIWRIIVMFGALPAALTYYW) form a helical membrane-spanning segment. Residues 233-292 (RMKMPETARYTALVAKNIKQATADMSKVLQTDIELEERVEDDVKDPKQNYGLFSKEFLRR) lie on the Cytoplasmic side of the membrane. The chain crosses the membrane as a helical span at residues 293-313 (HGLHLLGTTSTWFLLDIAFYS). At 314-348 (QNLFQKDIFSAIGWIPKAATMNATHEVFRIARAQT) the chain is on the extracellular side. Residues 349–369 (LIALCSTVPGYWFTVAFIDTI) traverse the membrane as a helical segment. Over 370–371 (GR) the chain is Cytoplasmic. A helical transmembrane segment spans residues 372 to 392 (FKIQLNGFFMMTVFMFAIAFP). The Extracellular portion of the chain corresponds to 393–402 (YNHWIKPENR). A helical transmembrane segment spans residues 403-423 (IGFVVMYSLTFFFANFGPNAT). At 424 to 441 (TFIVPAEIFPARLRSTCH) the chain is on the cytoplasmic side. Residues 442-462 (GISAAAGKAGAIVGAFGFLYA) form a helical membrane-spanning segment. Topologically, residues 463–484 (AQSQDKAKVDAGYPPGIGVKNS) are extracellular. A helical transmembrane segment spans residues 485–505 (LIMLGVLNFIGMLFTFLVPEP). Over 506-524 (KGKSLEELSGEAEVSHDEK) the chain is Cytoplasmic.

This sequence belongs to the major facilitator superfamily. Phosphate:H(+) symporter (TC 2.A.1.9) family. Interacts with NLA. Ubiquitinated by NLA. Ubiquitination of PHT1-1 leads to its degradation by the proteasome. As to expression, mostly expressed in roots, especially in trichoblasts and in emerging secondary roots and root hairs, but not in root tips. Also present in hydathodes, axillary buds and peripheral endosperm of germinating seeds.

It localises to the cell membrane. Inhibited by protonophores (e.g. 2,4-dinitrophenol and carbonylcyanide m-chlorophenylhydrazone), the plasma membrane H(+)-ATPase inhibitor diethylstilbestorol, and the phosphate analog arsenate. Functionally, high-affinity transporter for external inorganic phosphate. Acts as a H(+):phosphate symporter in both low- and high-Pi conditions. Confers sensitivity to arsenate. The protein is Inorganic phosphate transporter 1-1 (PHT1-1) of Arabidopsis thaliana (Mouse-ear cress).